Here is a 473-residue protein sequence, read N- to C-terminus: Ribulose bisphosphate carboxylase large chain (473 aa).

Substrate is bound by residues N116 and T166. K168 functions as the Proton acceptor in the catalytic mechanism. A substrate-binding site is contributed by K170. 3 residues coordinate Mg(2+): K194, D196, and E197. The residue at position 194 (K194) is an N6-carboxylysine. H287 acts as the Proton acceptor in catalysis. The substrate site is built by R288, H320, and S372.

Belongs to the RuBisCO large chain family. Type I subfamily. In terms of assembly, heterohexadecamer of 8 large chains and 8 small chains. The cofactor is Mg(2+).

It carries out the reaction 2 (2R)-3-phosphoglycerate + 2 H(+) = D-ribulose 1,5-bisphosphate + CO2 + H2O. It catalyses the reaction D-ribulose 1,5-bisphosphate + O2 = 2-phosphoglycolate + (2R)-3-phosphoglycerate + 2 H(+). Functionally, ruBisCO catalyzes two reactions: the carboxylation of D-ribulose 1,5-bisphosphate, the primary event in carbon dioxide fixation, as well as the oxidative fragmentation of the pentose substrate. Both reactions occur simultaneously and in competition at the same active site. The sequence is that of Ribulose bisphosphate carboxylase large chain from Rhodobacter capsulatus (strain ATCC BAA-309 / NBRC 16581 / SB1003).